A 335-amino-acid chain; its full sequence is NmrA-like family domain-containing oxidoreductase hkm9 (335 aa).

NADP(+) is bound by residues 12-17 (GATGNQ), 38-42 (RNPNS), 59-60 (DG), 80-82 (INS), K137, and 161-164 (YLEN).

This sequence belongs to the NmrA-type oxidoreductase family.

It functions in the pathway secondary metabolite biosynthesis. Functionally, nmrA-like family domain-containing oxidoreductase; part of the gene cluster that mediates the biosynthesis of hancockiamides, an unusual new family of N-cinnamoylated piperazines. The NRPS hkm10 and the NmrA-like reductase hkm9 are proposed to convert two molecules of L-Phe to the intermediary piperazine called xenocockiamide A. Xenocockiamide A is then converted to hancockiamide D via a series of hydroxylations and O-methylations. The tyrosinase hkm6 may catalyze an aromatic hydroxylation, then the 2-oxoglutarate-dependent Fe(II) dioxygenase hkm4 and the FAD-dependent phenol hydroxylase hkm7 may catalyze consecutive hydroxylations to install 2 more hydroxy groups, and the methyltransferase hkm8 probably catalyzes two methylations using 2 molecules of S-adenosyl-L-methionine (SAM). The NRPS hkm11 activates and transfers trans-cinnamate supplied by the PAL hkm12 to hancockiamide D and produces hancockiamide A. NRPS Hkm11 has the flexibility to tolerate the bulky hancockiamide G as a substrate and the absence of the acetyl-transferase hkm3 opens up the opportunity for hkm11 to introduce a second N-cinnamoyl moiety. The cytochrome P450 monooxygenase hkm5 catalyzes the methylenedioxy bridge formation, converting hancockiamide A into hancockiamide G. Hkm5 can also convert hancockiamide B into hancockiamide C, and hancockiamide D into hancockiamide H. The N-acetyltransferase hkm3 finally transfers an acetyl group to 1-N of piperazine, converting hancockiamide A into hancockiamide B and hancockiamide G into hancockiamide C. In Aspergillus hancockii, this protein is NmrA-like family domain-containing oxidoreductase hkm9.